Here is a 458-residue protein sequence, read N- to C-terminus: Glycogen synthase (458 aa).

Residue K15 participates in ADP-alpha-D-glucose binding.

Belongs to the glycosyltransferase 1 family. Bacterial/plant glycogen synthase subfamily.

The catalysed reaction is [(1-&gt;4)-alpha-D-glucosyl](n) + ADP-alpha-D-glucose = [(1-&gt;4)-alpha-D-glucosyl](n+1) + ADP + H(+). Its pathway is glycan biosynthesis; glycogen biosynthesis. Functionally, synthesizes alpha-1,4-glucan chains using ADP-glucose. This is Glycogen synthase from Gloeobacter violaceus (strain ATCC 29082 / PCC 7421).